Reading from the N-terminus, the 224-residue chain is BTB/POZ domain-containing protein At5g48510 (224 aa).

Positions 24 to 98 (VDVMLKAKNS…ICSDGSMLSA (75 aa)) constitute a BTB domain.

Interacts with CUL3A.

It functions in the pathway protein modification; protein ubiquitination. Its function is as follows. May act as a substrate-specific adapter of an E3 ubiquitin-protein ligase complex (CUL3-RBX1-BTB) which mediates the ubiquitination and subsequent proteasomal degradation of target proteins. This Arabidopsis thaliana (Mouse-ear cress) protein is BTB/POZ domain-containing protein At5g48510.